A 491-amino-acid polypeptide reads, in one-letter code: MDRKMVESLFQRASTLKCLVVGDLMLDEYLWGRTDRISPEAPVQVVDVLREDLRLGGAGNVANNLLALGCQVTVASVIGEDENGWALLKAFSRQGVDTAPIYQEPGRRTGRKTRVIAANQQIVRIDRESREPLSGQIEQQLINWLQQHITGFDVVLVSDYLKGVLTPSVLASVTSTASRRNIPVLVDPKGSDYSKYRGATCLTPNRKEAEAASGVPIQDGASLQQAADTIMSTVGLDNLLITRSEEGMSLFCGNGETVHIPTVAREVFDVTGAGDTVLALLACGLAGGLPLAESARLANVAAGIAVAKLGTSTVTPAEIIAAVSLEHRDSDSKIKNREVLSEIIAAERAKGRQVVFTNGCFDLLHAGHVKYLQAARRLGDLLILGLNSDASVRRLKGPKRPLIDEDERGHLMAALDCIDYVCLFEEDTPLELITALKPQILVKGGDYTPEGVVGKDLVESYGGRVELIPFVDGKSTTNIIEKVLERYTDEQ.

The ribokinase stretch occupies residues 1 to 330 (MDRKMVESLF…AAVSLEHRDS (330 aa)). ATP is bound at residue 205–208 (NRKE). Residue Asp-275 is part of the active site. Residues 356 to 491 (FTNGCFDLLH…KVLERYTDEQ (136 aa)) are cytidylyltransferase.

In the N-terminal section; belongs to the carbohydrate kinase PfkB family. It in the C-terminal section; belongs to the cytidylyltransferase family. In terms of assembly, homodimer.

The catalysed reaction is D-glycero-beta-D-manno-heptose 7-phosphate + ATP = D-glycero-beta-D-manno-heptose 1,7-bisphosphate + ADP + H(+). It catalyses the reaction D-glycero-beta-D-manno-heptose 1-phosphate + ATP + H(+) = ADP-D-glycero-beta-D-manno-heptose + diphosphate. It participates in nucleotide-sugar biosynthesis; ADP-L-glycero-beta-D-manno-heptose biosynthesis; ADP-L-glycero-beta-D-manno-heptose from D-glycero-beta-D-manno-heptose 7-phosphate: step 1/4. It functions in the pathway nucleotide-sugar biosynthesis; ADP-L-glycero-beta-D-manno-heptose biosynthesis; ADP-L-glycero-beta-D-manno-heptose from D-glycero-beta-D-manno-heptose 7-phosphate: step 3/4. Its function is as follows. Catalyzes the phosphorylation of D-glycero-D-manno-heptose 7-phosphate at the C-1 position to selectively form D-glycero-beta-D-manno-heptose-1,7-bisphosphate. Catalyzes the ADP transfer from ATP to D-glycero-beta-D-manno-heptose 1-phosphate, yielding ADP-D-glycero-beta-D-manno-heptose. The polypeptide is Bifunctional protein HldE (Trichlorobacter lovleyi (strain ATCC BAA-1151 / DSM 17278 / SZ) (Geobacter lovleyi)).